We begin with the raw amino-acid sequence, 47 residues long: Potassium channel toxin TcoKIK (47 aa).

The BetaSPN-type CS-alpha/beta domain maps to 14–47; that stretch reads EYACPAIDKFCEDHCAAKKAVGKCDDFKCNCIKL. 3 disulfides stabilise this stretch: Cys17-Cys37, Cys24-Cys42, and Cys28-Cys44.

It belongs to the long chain scorpion toxin family. Class 2 subfamily. Expressed by the venom gland.

Its subcellular location is the secreted. It localises to the target cell membrane. In terms of biological role, blocks voltage-gated potassium channels. Its application (10 uM) to cells recombinantly expressing channels results in membrane damage and cell lysis. The protein is Potassium channel toxin TcoKIK of Tityus costatus (Brazilian scorpion).